Reading from the N-terminus, the 923-residue chain is Probable dipeptidyl-aminopeptidase B (923 aa).

Basic and acidic residues predominate over residues M1–P16. The disordered stretch occupies residues M1–S21. Residues M1 to A99 are Cytoplasmic-facing. The helical; Signal-anchor for type II membrane protein transmembrane segment at L100 to F120 threads the bilayer. Residues R121–H923 are Vacuolar-facing. N135, N351, and N574 each carry an N-linked (GlcNAc...) asparagine glycan. S756 acts as the Charge relay system in catalysis. N815 carries N-linked (GlcNAc...) asparagine glycosylation. Residues D833 and H866 each act as charge relay system in the active site. The N-linked (GlcNAc...) asparagine glycan is linked to N902.

The protein belongs to the peptidase S9B family.

Its subcellular location is the vacuole membrane. The enzyme catalyses Release of an N-terminal dipeptide, Xaa-Yaa-|-Zaa-, from a polypeptide, preferentially when Yaa is Pro, provided Zaa is neither Pro nor hydroxyproline.. Functionally, type IV dipeptidyl-peptidase which removes N-terminal dipeptides sequentially from polypeptides having unsubstituted N-termini provided that the penultimate residue is proline. In Ajellomyces capsulatus (strain G186AR / H82 / ATCC MYA-2454 / RMSCC 2432) (Darling's disease fungus), this protein is Probable dipeptidyl-aminopeptidase B (DAPB).